Here is a 304-residue protein sequence, read N- to C-terminus: Protoheme IX farnesyltransferase (304 aa).

The next 9 membrane-spanning stretches (helical) occupy residues Val-32–Val-52, Leu-54–Phe-74, Ala-104–Asn-124, Leu-126–Leu-146, Ile-154–Gly-174, Ala-180–Ile-200, Cys-226–Met-246, Cys-247–Trp-267, and Phe-284–Val-304.

It belongs to the UbiA prenyltransferase family. Protoheme IX farnesyltransferase subfamily.

Its subcellular location is the cell inner membrane. It carries out the reaction heme b + (2E,6E)-farnesyl diphosphate + H2O = Fe(II)-heme o + diphosphate. Its pathway is porphyrin-containing compound metabolism; heme O biosynthesis; heme O from protoheme: step 1/1. Its function is as follows. Converts heme B (protoheme IX) to heme O by substitution of the vinyl group on carbon 2 of heme B porphyrin ring with a hydroxyethyl farnesyl side group. The polypeptide is Protoheme IX farnesyltransferase (Shewanella sediminis (strain HAW-EB3)).